A 479-amino-acid polypeptide reads, in one-letter code: GMP reductase (479 aa).

CBS domains lie at 96 to 153 (VLDT…VRDI) and 154 to 212 (AVTD…ATDS). Residues 246–248 (DTA) and 296–298 (GVG) contribute to the NADP(+) site. Cysteine 303 functions as the Thioimidate intermediate in the catalytic mechanism.

It belongs to the IMPDH/GMPR family. GuaB1 subfamily. It depends on a monovalent cation as a cofactor.

It carries out the reaction IMP + NH4(+) + NADP(+) = GMP + NADPH + 2 H(+). It functions in the pathway purine metabolism; IMP biosynthesis via salvage pathway. Involved in the purine-salvage pathway. Catalyzes the NADPH-dependent conversion of GMP to IMP. In Mycobacterium bovis (strain ATCC BAA-935 / AF2122/97), this protein is GMP reductase.